A 239-amino-acid polypeptide reads, in one-letter code: Octanoyltransferase (239 aa).

In terms of domain architecture, BPL/LPL catalytic spans 59 to 239 (PFSPQAVWLL…KRRFKLNWEK (181 aa)). Substrate-binding positions include 101-108 (RGGEVTHH), 168-170 (SIG), and 181-183 (GFS). The Acyl-thioester intermediate role is filled by Cys-199.

Belongs to the LipB family.

It localises to the cytoplasm. The catalysed reaction is octanoyl-[ACP] + L-lysyl-[protein] = N(6)-octanoyl-L-lysyl-[protein] + holo-[ACP] + H(+). It participates in protein modification; protein lipoylation via endogenous pathway; protein N(6)-(lipoyl)lysine from octanoyl-[acyl-carrier-protein]: step 1/2. Catalyzes the transfer of endogenously produced octanoic acid from octanoyl-acyl-carrier-protein onto the lipoyl domains of lipoate-dependent enzymes. Lipoyl-ACP can also act as a substrate although octanoyl-ACP is likely to be the physiological substrate. This Prochlorococcus marinus (strain NATL2A) protein is Octanoyltransferase.